The sequence spans 424 residues: S-adenosylmethionine synthase (424 aa).

His-14 contacts ATP. Asp-16 lines the Mg(2+) pocket. Glu-42 contributes to the K(+) binding site. Residues Glu-55 and Gln-98 each contribute to the L-methionine site. The tract at residues Gln-98–Arg-108 is flexible loop. ATP contacts are provided by residues Asp-165–Lys-167, Lys-242–Phe-243, Asp-251, Arg-257–Lys-258, Ala-274, and Lys-278. Asp-251 serves as a coordination point for L-methionine. Lys-282 is an L-methionine binding site.

This sequence belongs to the AdoMet synthase family. In terms of assembly, homotetramer; dimer of dimers. Mg(2+) is required as a cofactor. The cofactor is K(+).

It localises to the cytoplasm. The catalysed reaction is L-methionine + ATP + H2O = S-adenosyl-L-methionine + phosphate + diphosphate. It functions in the pathway amino-acid biosynthesis; S-adenosyl-L-methionine biosynthesis; S-adenosyl-L-methionine from L-methionine: step 1/1. Its function is as follows. Catalyzes the formation of S-adenosylmethionine (AdoMet) from methionine and ATP. The overall synthetic reaction is composed of two sequential steps, AdoMet formation and the subsequent tripolyphosphate hydrolysis which occurs prior to release of AdoMet from the enzyme. The protein is S-adenosylmethionine synthase of Azobacteroides pseudotrichonymphae genomovar. CFP2.